Here is a 435-residue protein sequence, read N- to C-terminus: Serine/threonine-protein kinase 40 (435 aa).

Positions 35 to 332 (FILGPRLGNS…EELDSLSSII (298 aa)) constitute a Protein kinase domain. Residues 41-49 (LGNSPVPSI) and lysine 66 contribute to the ATP site. Aspartate 197 acts as the Proton acceptor in catalysis.

This sequence belongs to the protein kinase superfamily. CAMK Ser/Thr protein kinase family.

It localises to the nucleus. The protein resides in the cytoplasm. It carries out the reaction L-seryl-[protein] + ATP = O-phospho-L-seryl-[protein] + ADP + H(+). The catalysed reaction is L-threonyl-[protein] + ATP = O-phospho-L-threonyl-[protein] + ADP + H(+). Functionally, may be a negative regulator of NF-kappa-B and p53-mediated gene transcription. In Gallus gallus (Chicken), this protein is Serine/threonine-protein kinase 40 (STK40).